We begin with the raw amino-acid sequence, 156 residues long: Small ribosomal subunit protein uS7 (156 aa).

It belongs to the universal ribosomal protein uS7 family. As to quaternary structure, part of the 30S ribosomal subunit. Contacts proteins S9 and S11.

Its function is as follows. One of the primary rRNA binding proteins, it binds directly to 16S rRNA where it nucleates assembly of the head domain of the 30S subunit. Is located at the subunit interface close to the decoding center, probably blocks exit of the E-site tRNA. This chain is Small ribosomal subunit protein uS7, found in Limosilactobacillus fermentum (strain NBRC 3956 / LMG 18251) (Lactobacillus fermentum).